Here is a 560-residue protein sequence, read N- to C-terminus: Serine palmitoyltransferase 2 (560 aa).

A helical membrane pass occupies residues 65–85; the sequence is PMLVAVLTYVGYGVLTLFGYL. Lys377 bears the N6-(pyridoxal phosphate)lysine mark.

The protein belongs to the class-II pyridoxal-phosphate-dependent aminotransferase family. As to quaternary structure, component of the serine palmitoyltransferase (SPT) complex, which is composed of SPTLC1, SPTLC2 or SPTLC3 and SPTSSA or SPTSSB. The heterodimer consisting of SPTLC1 and SPTLC2/SPTLC3 forms the catalytic core of the enzyme, while SPTSSA or SPTSSB subunits determine substrate specificity. SPT also interacts with ORMDL proteins, especially ORMDL3, which negatively regulate SPT activity in the presence of ceramides. Forms dimers of heterodimers with SPTLC1. Pyridoxal 5'-phosphate serves as cofactor. Expressed in astrocytes.

Its subcellular location is the endoplasmic reticulum membrane. It catalyses the reaction L-serine + hexadecanoyl-CoA + H(+) = 3-oxosphinganine + CO2 + CoA. The enzyme catalyses octadecanoyl-CoA + L-serine + H(+) = 3-oxoeicosasphinganine + CO2 + CoA. It participates in lipid metabolism; sphingolipid metabolism. With respect to regulation, SPT complex catalytic activity is negatively regulated by ORMDL proteins, including ORMDL3, in the presence of ceramides. This mechanism allows to maintain ceramide levels at sufficient concentrations for the production of complex sphingolipids, but which prevents the accumulation of ceramides to levels that trigger apoptosis. Functionally, component of the serine palmitoyltransferase multisubunit enzyme (SPT) that catalyzes the initial and rate-limiting step in sphingolipid biosynthesis by condensing L-serine and activated acyl-CoA (most commonly palmitoyl-CoA) to form long-chain bases. The SPT complex is composed of SPTLC1, SPTLC2 or SPTLC3 and SPTSSA or SPTSSB. Within this complex, the heterodimer consisting of SPTLC1 and SPTLC2/SPTLC3 forms the catalytic core. The composition of the serine palmitoyltransferase (SPT) complex determines the substrate preference. The SPTLC1-SPTLC2-SPTSSA complex shows a strong preference for C16-CoA substrate, while the SPTLC1-SPTLC3-SPTSSA isozyme uses both C14-CoA and C16-CoA as substrates, with a slight preference for C14-CoA. The SPTLC1-SPTLC2-SPTSSB complex shows a strong preference for C18-CoA substrate, while the SPTLC1-SPTLC3-SPTSSB isozyme displays an ability to use a broader range of acyl-CoAs, without apparent preference. Crucial for adipogenesis. The protein is Serine palmitoyltransferase 2 of Rattus norvegicus (Rat).